A 160-amino-acid polypeptide reads, in one-letter code: Single-stranded DNA-binding protein 2 (160 aa).

The SSB domain maps to 2–104; it reads MNRVVLVGRL…VVAESVQFLE (103 aa). Residues 107 to 160 form a disordered region; that stretch reads NNNVEGATSNNYQNKANYSNNNQTSSYRADTSQKSDSFASEGKPIDINEDDLPF. Low complexity predominate over residues 115–129; sequence SNNYQNKANYSNNNQ. Over residues 130 to 144 the composition is skewed to polar residues; it reads TSSYRADTSQKSDSF. The short motif at 155-160 is the Important for interaction with partner proteins element; it reads EDDLPF.

As to quaternary structure, homotetramer.

Plays an important role in DNA replication, recombination and repair. Binds to ssDNA and to an array of partner proteins to recruit them to their sites of action during DNA metabolism. The polypeptide is Single-stranded DNA-binding protein 2 (ssb2) (Listeria monocytogenes serovar 1/2a (strain ATCC BAA-679 / EGD-e)).